We begin with the raw amino-acid sequence, 246 residues long: Ribosomal RNA small subunit methyltransferase J (246 aa).

S-adenosyl-L-methionine is bound by residues glutamate 115–arginine 116 and aspartate 169.

Belongs to the methyltransferase superfamily. RsmJ family.

The protein resides in the cytoplasm. The enzyme catalyses guanosine(1516) in 16S rRNA + S-adenosyl-L-methionine = N(2)-methylguanosine(1516) in 16S rRNA + S-adenosyl-L-homocysteine + H(+). In terms of biological role, specifically methylates the guanosine in position 1516 of 16S rRNA. The sequence is that of Ribosomal RNA small subunit methyltransferase J from Buchnera aphidicola subsp. Acyrthosiphon pisum (strain APS) (Acyrthosiphon pisum symbiotic bacterium).